A 216-amino-acid polypeptide reads, in one-letter code: Small ribosomal subunit protein uS3c (216 aa).

Residues 39-109 (IRSYINRELE…SIRINVIELT (71 aa)) enclose the KH type-2 domain.

Belongs to the universal ribosomal protein uS3 family. Part of the 30S ribosomal subunit.

It localises to the plastid. The protein localises to the chloroplast. The polypeptide is Small ribosomal subunit protein uS3c (rps3) (Guillardia theta (Cryptophyte)).